The primary structure comprises 676 residues: DNA ligase (676 aa).

NAD(+)-binding positions include 35 to 39, 84 to 85, and glutamate 115; these read DAVYD and SL. The active-site N6-AMP-lysine intermediate is lysine 117. Residues arginine 138, glutamate 177, lysine 296, and lysine 320 each contribute to the NAD(+) site. 4 residues coordinate Zn(2+): cysteine 414, cysteine 417, cysteine 432, and cysteine 437. The BRCT domain maps to 599–676; the sequence is NANLKLVGKT…SEAELLKILA (78 aa).

This sequence belongs to the NAD-dependent DNA ligase family. LigA subfamily. The cofactor is Mg(2+). It depends on Mn(2+) as a cofactor.

It catalyses the reaction NAD(+) + (deoxyribonucleotide)n-3'-hydroxyl + 5'-phospho-(deoxyribonucleotide)m = (deoxyribonucleotide)n+m + AMP + beta-nicotinamide D-nucleotide.. In terms of biological role, DNA ligase that catalyzes the formation of phosphodiester linkages between 5'-phosphoryl and 3'-hydroxyl groups in double-stranded DNA using NAD as a coenzyme and as the energy source for the reaction. It is essential for DNA replication and repair of damaged DNA. This chain is DNA ligase, found in Trichormus variabilis (strain ATCC 29413 / PCC 7937) (Anabaena variabilis).